The chain runs to 64 residues: uncharacterized protein (64 aa).

Residues 1 to 64 (MMITRGWEGW…LDPAISRSSS (64 aa)) form a disordered region. Positions 16–28 (RGAGTGTGLGGPG) are enriched in gly residues.

This is an uncharacterized protein from Homo sapiens (Human).